We begin with the raw amino-acid sequence, 244 residues long: Phosphoadenosine 5'-phosphosulfate reductase (244 aa).

Cys239 acts as the Nucleophile; cysteine thiosulfonate intermediate in catalysis.

Belongs to the PAPS reductase family. CysH subfamily.

The protein localises to the cytoplasm. It carries out the reaction [thioredoxin]-disulfide + sulfite + adenosine 3',5'-bisphosphate + 2 H(+) = [thioredoxin]-dithiol + 3'-phosphoadenylyl sulfate. It participates in sulfur metabolism; hydrogen sulfide biosynthesis; sulfite from sulfate: step 3/3. Its function is as follows. Catalyzes the formation of sulfite from phosphoadenosine 5'-phosphosulfate (PAPS) using thioredoxin as an electron donor. The protein is Phosphoadenosine 5'-phosphosulfate reductase of Shigella flexneri serotype 5b (strain 8401).